The following is a 623-amino-acid chain: Glucokinase regulatory protein (623 aa).

SIS domains follow at residues 90–286 (VQEV…QGVV) and 320–476 (VGIS…VQKF). Residues 109-110 (TS), Glu-153, and 179-181 (SVG) contribute to the beta-D-fructose 1-phosphate site. 109-110 (TS) is a beta-D-fructose 6-phosphate binding site. Residue 179-181 (SVG) coordinates beta-D-fructose 6-phosphate. Residues 199 to 200 (AV) are important for interaction with GCK. A beta-D-fructose 1-phosphate-binding site is contributed by Glu-348. Positions 463 to 465 (LLF) are essential for interaction with GCK.

This sequence belongs to the GCKR family. In terms of assembly, interacts (fructose 6-phosphate bound form) with GCK.

It localises to the cytoplasm. It is found in the nucleus. The protein resides in the mitochondrion. Functionally, regulates glucokinase (GCK) by forming an inactive complex with this enzyme. Acts by promoting GCK recruitment to the nucleus, possibly to provide a reserve of GCK that can be quickly released in the cytoplasm after a meal. The affinity of GCKR for GCK is modulated by fructose metabolites: GCKR with bound fructose 6-phosphate has increased affinity for GCK, while GCKR with bound fructose 1-phosphate has strongly decreased affinity for GCK and does not inhibit GCK activity. The protein is Glucokinase regulatory protein of Mus musculus (Mouse).